Reading from the N-terminus, the 149-residue chain is Inner membrane protein YidI (149 aa).

Residues 1–8 (MGIIAQNK) are Cytoplasmic-facing. The helical transmembrane segment at 9-31 (ISSLGMLFGAIALMMGIIHFSFG) threads the bilayer. Topologically, residues 32-77 (PFSAPPPTFESIVADKTAEIKRGLLAGIKGEKITTVEKKEDVDVDK) are periplasmic. The chain crosses the membrane as a helical span at residues 78–97 (ILNQSGIALAIAALLCAFIG). The Cytoplasmic portion of the chain corresponds to 98 to 117 (GMRKENRWGIRGALVFGGGT). The chain crosses the membrane as a helical span at residues 118–140 (LAFHTLLFGIGIVCSILLIFLIF). Residues 141-149 (SFLTGGSLV) lie on the Periplasmic side of the membrane.

Its subcellular location is the cell inner membrane. In Escherichia coli (strain K12), this protein is Inner membrane protein YidI (yidI).